Consider the following 127-residue polypeptide: Small ribosomal subunit protein bS6 (127 aa).

Residues 101–127 (PMMKEEKARDLLQGAKADAPAEQPAAA) form a disordered region. Residues 115–127 (AKADAPAEQPAAA) show a composition bias toward low complexity.

It belongs to the bacterial ribosomal protein bS6 family.

Its function is as follows. Binds together with bS18 to 16S ribosomal RNA. The polypeptide is Small ribosomal subunit protein bS6 (Thiobacillus denitrificans (strain ATCC 25259 / T1)).